We begin with the raw amino-acid sequence, 403 residues long: Microtubule-associated protein tau (403 aa).

Over residues 1-32 the composition is skewed to basic and acidic residues; the sequence is MAEPRQEFDVMEDHAQGDYTLQDHEGDMEPGL. The tract at residues 1 to 219 is disordered; that stretch reads MAEPRQEFDV…GPMPDLKNVK (219 aa). Ala-2 is modified (N-acetylalanine). Tyr-19 carries the post-translational modification Phosphotyrosine. Lys-33 participates in a covalent cross-link: Glycyl lysine isopeptide (Lys-Gly) (interchain with G-Cter in ubiquitin). 2 positions are modified to phosphoserine: Ser-35 and Ser-50. The segment covering 50-60 has biased composition (polar residues); that stretch reads SETSDAKSTPT. Phosphothreonine occurs at positions 58, 60, and 71. Over residues 90 to 106 the composition is skewed to basic and acidic residues; sequence KGKDGTGPDDKKAKGAD. Phosphothreonine is present on Thr-115. At Arg-117 the chain carries Omega-N-methylarginine. Lys-125 bears the N6,N6-dimethyllysine; alternate mark. Lys-125 carries the post-translational modification N6-acetyllysine; alternate. Residues Thr-131, Thr-137, Thr-138, and Thr-143 each carry the phosphothreonine modification. Positions 136-147 are enriched in low complexity; the sequence is KTTPTPKTSPGT. Phosphoserine occurs at positions 153 and 157. The span at 156-176 shows a compositional bias: low complexity; it reads RSGYSSPGSPGTPGSRSRTPS. The residue at position 159 (Tyr-159) is a Phosphotyrosine. Residues Ser-160, Ser-161, and Ser-164 each carry the phosphoserine modification. Thr-167 and Thr-174 each carry phosphothreonine. Residue Ser-176 is modified to Phosphoserine. Phosphothreonine is present on Thr-179. The residue at position 187 (Lys-187) is an N6-acetyllysine. A Phosphothreonine modification is found at Thr-193. Phosphoserine occurs at positions 197 and 199. 4 Tau/MAP repeats span residues 206 to 236, 237 to 267, 268 to 298, and 299 to 330; these read QAAP…GGGK, VQII…GGGS, VQIV…GGGQ, and VEVK…GGGN. Lys-216 is covalently cross-linked (Glycyl lysine isopeptide (Lys-Gly) (interchain with G-Cter in ubiquitin)). Lys-221 is subject to N6-acetyllysine; alternate. The residue at position 221 (Lys-221) is an N6-methyllysine; alternate. Residue Lys-221 forms a Glycyl lysine isopeptide (Lys-Gly) (interchain with G-Cter in ubiquitin); alternate linkage. Ser-224 carries the phosphoserine modification. Lys-229 is covalently cross-linked (Glycyl lysine isopeptide (Lys-Gly) (interchain with G-Cter in ubiquitin)). Residue Lys-243 is modified to N6-acetyllysine; alternate. Residue Lys-243 forms a Glycyl lysine isopeptide (Lys-Gly) (interchain with G-Cter in ubiquitin); alternate linkage. Ser-247 and Ser-251 each carry phosphoserine. At Lys-252 the chain carries N6-acetyllysine. Cys-253 and Cys-284 form a disulfide bridge. Position 255 is a phosphoserine (Ser-255). Residue Lys-260 is modified to N6-acetyllysine; alternate. Lys-260 is covalently cross-linked (Glycyl lysine isopeptide (Lys-Gly) (interchain with G-Cter in ubiquitin); alternate). The residue at position 267 (Ser-267) is a Phosphoserine. Lys-273 carries the post-translational modification N6,N6-dimethyllysine; alternate. An N6-acetyllysine; alternate mark is found at Lys-273, Lys-279, and Lys-283. Residues Lys-273, Lys-279, and Lys-283 each participate in a glycyl lysine isopeptide (Lys-Gly) (interchain with G-Cter in ubiquitin); alternate cross-link. Ser-286 carries the post-translational modification Phosphoserine. An N6-acetyllysine; alternate mark is found at Lys-293, Lys-305, and Lys-309. Residues Lys-293, Lys-305, and Lys-309 each participate in a glycyl lysine isopeptide (Lys-Gly) (interchain with G-Cter in ubiquitin); alternate cross-link. Arg-311 is subject to Omega-N-methylarginine. Residue Ser-314 is modified to Phosphoserine. Lys-315 participates in a covalent cross-link: Glycyl lysine isopeptide (Lys-Gly) (interchain with G-Cter in ubiquitin). Ser-318 carries the phosphoserine modification. Lys-331 is subject to N6-acetyllysine; alternate. Residue Lys-331 forms a Glycyl lysine isopeptide (Lys-Gly) (interchain with G-Cter in ubiquitin); alternate linkage. Lys-337 is covalently cross-linked (Glycyl lysine isopeptide (Lys-Gly) (interchain with G-Cter in ubiquitin)). Residue Lys-347 is modified to N6-acetyllysine; alternate. A Glycyl lysine isopeptide (Lys-Gly) (interchain with G-Cter in ubiquitin); alternate cross-link involves residue Lys-347. Tyr-356 bears the Phosphotyrosine mark. Phosphoserine is present on residues Ser-358 and Ser-362. The segment at 360–379 is disordered; the sequence is VVSGDTSPRHLSNVSSTGSI. Residues 363–378 show a composition bias toward polar residues; the sequence is GDTSPRHLSNVSSTGS. Phosphothreonine is present on Thr-365. 4 positions are modified to phosphoserine: Ser-366, Ser-371, Ser-378, and Ser-384. Thr-389 is subject to Phosphothreonine.

Interacts with MARK1, MARK2, MARK3 and MARK4. Interacts with SQSTM1 when polyubiquitinated. Interacts with PSMC2 through SQSTM1. Interacts with FKBP4. Binds to CSNK1D. Interacts with SGK1. Interacts with PIN1. Interacts with LRRK2. Interacts with LRP1, leading to endocytosis; this interaction is reduced in the presence of LRPAP1/RAP. Polyubiquitinated. Requires functional TRAF6 and may provoke SQSTM1-dependent degradation by the proteasome. In terms of processing, phosphorylation at various serine and threonine residues in S-P or T-P motifs by proline-directed protein kinases (PDPK1, CDK1, CDK5, GSK3, MAPK) (a few sites per protein in interphase, more in mitosis), and at serine residues in K-X-G-S motifs by MAP/microtubule affinity-regulating kinase (MARK1, MARK2, MARK3, MARK4), causing detachment from microtubules, and their disassembly. Phosphorylation at Ser-224 by BRSK1 and BRSK2 in neurons affects ability to bind microtubules and plays a role in neuron polarization. Phosphorylated by PHK. Dephosphorylation at several serine and threonine residues by the serine/threonine phosphatase PPP5C. Expressed in neurons.

It localises to the cytoplasm. It is found in the cytosol. The protein localises to the cell membrane. The protein resides in the cytoskeleton. Its subcellular location is the cell projection. It localises to the axon. It is found in the dendrite. In terms of biological role, promotes microtubule assembly and stability, and might be involved in the establishment and maintenance of neuronal polarity. The C-terminus binds axonal microtubules while the N-terminus binds neural plasma membrane components, suggesting that tau functions as a linker protein between both. Axonal polarity is predetermined by tau localization (in the neuronal cell) in the domain of the cell body defined by the centrosome. The short isoforms allow plasticity of the cytoskeleton whereas the longer isoforms may preferentially play a role in its stabilization. The protein is Microtubule-associated protein tau (MAPT) of Capra hircus (Goat).